The following is a 394-amino-acid chain: NAD(P)H-quinone oxidoreductase subunit H (394 aa).

Belongs to the complex I 49 kDa subunit family. In terms of assembly, NDH-1 can be composed of about 15 different subunits; different subcomplexes with different compositions have been identified which probably have different functions.

The protein localises to the cellular thylakoid membrane. It carries out the reaction a plastoquinone + NADH + (n+1) H(+)(in) = a plastoquinol + NAD(+) + n H(+)(out). It catalyses the reaction a plastoquinone + NADPH + (n+1) H(+)(in) = a plastoquinol + NADP(+) + n H(+)(out). Functionally, NDH-1 shuttles electrons from an unknown electron donor, via FMN and iron-sulfur (Fe-S) centers, to quinones in the respiratory and/or the photosynthetic chain. The immediate electron acceptor for the enzyme in this species is believed to be plastoquinone. Couples the redox reaction to proton translocation, and thus conserves the redox energy in a proton gradient. Cyanobacterial NDH-1 also plays a role in inorganic carbon-concentration. This is NAD(P)H-quinone oxidoreductase subunit H from Trichormus variabilis (strain ATCC 29413 / PCC 7937) (Anabaena variabilis).